Consider the following 441-residue polypeptide: Protein MONOCULM 1 (441 aa).

The disordered stretch occupies residues 1–33 (MLRSLHSSSSSDTDNNSGGCKNNGGGGGEAAAA). The span at 7-20 (SSSSSDTDNNSGGC) shows a compositional bias: low complexity. A compositionally biased stretch (gly residues) spans 21 to 33 (KNNGGGGGEAAAA). The GRAS domain occupies 41-437 (RAVAAAAPST…RPLLSVSAWQ (397 aa)). The leucine repeat I (LRI) stretch occupies residues 48–126 (PSTRDLLLAC…GAARPASSGA (79 aa)). Residues 127 to 195 (YLAFNQIAPF…LGPPEVRVTG (69 aa)) are VHIID. Positions 158-162 (VHILD) match the VHIID motif. Positions 205–256 (RTGNRLRAFARSIHLPFHFTPLLLSCATTAPHHVAGTSTGAAAAASTAAAAT) are leucine repeat II (LRII). The interval 266–361 (LAVNCVMFLH…QEVLGREIEA (96 aa)) is PFYRE. The SAW stretch occupies residues 364-437 (GPSGGRWWRG…RPLLSVSAWQ (74 aa)).

The protein belongs to the GRAS family. In terms of tissue distribution, expressed in a small number of epidermal or subepidermal cells at the leaf axils, in axillary meristems and the entire tiller buds. Undetected in the shoot apical meristem.

The protein localises to the nucleus. Putative transcription regulator that controls rice tillering by initiating axillary buds and promoting their outgrowth. Rice tiller is a specialized grain-bearing branch that is formed on the unelongated basal internode and grows independently of the mother stem (culm) by means of its own adventitious roots. The chain is Protein MONOCULM 1 from Oryza sativa subsp. japonica (Rice).